We begin with the raw amino-acid sequence, 156 residues long: ATP synthase subunit b (156 aa).

The chain crosses the membrane as a helical span at residues 7–27; that stretch reads LIAQFVVFFILAGFTMKFVWP.

Belongs to the ATPase B chain family. As to quaternary structure, F-type ATPases have 2 components, F(1) - the catalytic core - and F(0) - the membrane proton channel. F(1) has five subunits: alpha(3), beta(3), gamma(1), delta(1), epsilon(1). F(0) has three main subunits: a(1), b(2) and c(10-14). The alpha and beta chains form an alternating ring which encloses part of the gamma chain. F(1) is attached to F(0) by a central stalk formed by the gamma and epsilon chains, while a peripheral stalk is formed by the delta and b chains.

The protein resides in the cell inner membrane. Its function is as follows. F(1)F(0) ATP synthase produces ATP from ADP in the presence of a proton or sodium gradient. F-type ATPases consist of two structural domains, F(1) containing the extramembraneous catalytic core and F(0) containing the membrane proton channel, linked together by a central stalk and a peripheral stalk. During catalysis, ATP synthesis in the catalytic domain of F(1) is coupled via a rotary mechanism of the central stalk subunits to proton translocation. In terms of biological role, component of the F(0) channel, it forms part of the peripheral stalk, linking F(1) to F(0). This is ATP synthase subunit b from Herminiimonas arsenicoxydans.